We begin with the raw amino-acid sequence, 479 residues long: UDP-N-acetylmuramate--L-alanine ligase (479 aa).

An ATP-binding site is contributed by 128 to 134 (GAHGKTT).

It belongs to the MurCDEF family.

The protein resides in the cytoplasm. The enzyme catalyses UDP-N-acetyl-alpha-D-muramate + L-alanine + ATP = UDP-N-acetyl-alpha-D-muramoyl-L-alanine + ADP + phosphate + H(+). It functions in the pathway cell wall biogenesis; peptidoglycan biosynthesis. Its function is as follows. Cell wall formation. The protein is UDP-N-acetylmuramate--L-alanine ligase of Psychrobacter arcticus (strain DSM 17307 / VKM B-2377 / 273-4).